A 120-amino-acid chain; its full sequence is BolA-like protein 2 (120 aa).

The protein belongs to the BolA/IbaG family. Interacts with FRA1, GRX3 and GRX4.

It is found in the cytoplasm. Its subcellular location is the nucleus. Involved in the regulation of the iron regulon in response to decreased mitochondrial iron-sulfur cluster synthesis. May be involved in mitochondrial organization and biogenesis. The protein is BolA-like protein 2 (BOL2) of Saccharomyces cerevisiae (strain ATCC 204508 / S288c) (Baker's yeast).